A 140-amino-acid polypeptide reads, in one-letter code: Large ribosomal subunit protein uL16 (140 aa).

It belongs to the universal ribosomal protein uL16 family. Part of the 50S ribosomal subunit.

In terms of biological role, binds 23S rRNA and is also seen to make contacts with the A and possibly P site tRNAs. This is Large ribosomal subunit protein uL16 from Phytoplasma mali (strain AT).